Here is a 245-residue protein sequence, read N- to C-terminus: Ribonuclease 3 (245 aa).

Positions 19–148 (FKVFQEKIGI…FIGALYLDQG (130 aa)) constitute an RNase III domain. Glutamate 61 is a Mg(2+) binding site. Aspartate 65 is an active-site residue. Mg(2+) contacts are provided by aspartate 134 and glutamate 137. The active site involves glutamate 137. The region spanning 174–243 (DYKSQLQELI…AAEALKKLKE (70 aa)) is the DRBM domain.

This sequence belongs to the ribonuclease III family. In terms of assembly, homodimer. Mg(2+) is required as a cofactor.

The protein resides in the cytoplasm. The catalysed reaction is Endonucleolytic cleavage to 5'-phosphomonoester.. Digests double-stranded RNA. Involved in the processing of primary rRNA transcript to yield the immediate precursors to the large and small rRNAs (23S and 16S). Processes some mRNAs, and tRNAs when they are encoded in the rRNA operon. Processes pre-crRNA and tracrRNA of type II CRISPR loci if present in the organism. The sequence is that of Ribonuclease 3 from Bacillus cereus (strain ZK / E33L).